The sequence spans 450 residues: Ribosomal protein uS12 methylthiotransferase RimO (450 aa).

Positions 9–124 constitute an MTTase N-terminal domain; sequence NRINVVTLGC…LLSALEADYK (116 aa). [4Fe-4S] cluster contacts are provided by Cys18, Cys53, Cys87, Cys148, Cys152, and Cys155. Residues 134–365 enclose the Radical SAM core domain; it reads TTPKNYAYLK…EIQSQISWEL (232 aa). One can recognise a TRAM domain in the interval 367–434; the sequence is QQKIGEVFNV…DFDLYGEPLN (68 aa).

It belongs to the methylthiotransferase family. RimO subfamily. The cofactor is [4Fe-4S] cluster.

The protein resides in the cytoplasm. It catalyses the reaction L-aspartate(89)-[ribosomal protein uS12]-hydrogen + (sulfur carrier)-SH + AH2 + 2 S-adenosyl-L-methionine = 3-methylsulfanyl-L-aspartate(89)-[ribosomal protein uS12]-hydrogen + (sulfur carrier)-H + 5'-deoxyadenosine + L-methionine + A + S-adenosyl-L-homocysteine + 2 H(+). In terms of biological role, catalyzes the methylthiolation of an aspartic acid residue of ribosomal protein uS12. This chain is Ribosomal protein uS12 methylthiotransferase RimO, found in Christiangramia forsetii (strain DSM 17595 / CGMCC 1.15422 / KT0803) (Gramella forsetii).